The chain runs to 348 residues: Dihydroorotase (348 aa).

Zn(2+) contacts are provided by histidine 17 and histidine 19. Residues 19–21 (HLR) and asparagine 45 each bind substrate. Zn(2+) contacts are provided by lysine 103, histidine 140, and histidine 178. The residue at position 103 (lysine 103) is an N6-carboxylysine. Histidine 140 provides a ligand contact to substrate. Leucine 223 is a binding site for substrate. Aspartate 251 provides a ligand contact to Zn(2+). The active site involves aspartate 251. 2 residues coordinate substrate: histidine 255 and alanine 267.

It belongs to the metallo-dependent hydrolases superfamily. DHOase family. Class II DHOase subfamily. As to quaternary structure, homodimer. Zn(2+) serves as cofactor.

The catalysed reaction is (S)-dihydroorotate + H2O = N-carbamoyl-L-aspartate + H(+). The protein operates within pyrimidine metabolism; UMP biosynthesis via de novo pathway; (S)-dihydroorotate from bicarbonate: step 3/3. Functionally, catalyzes the reversible cyclization of carbamoyl aspartate to dihydroorotate. The protein is Dihydroorotase of Yersinia pestis.